The sequence spans 377 residues: Nitric oxide reductase FlRd-NAD(+) reductase (377 aa).

It belongs to the FAD-dependent oxidoreductase family. The cofactor is FAD.

The protein resides in the cytoplasm. It carries out the reaction 2 reduced [nitric oxide reductase rubredoxin domain] + NAD(+) + H(+) = 2 oxidized [nitric oxide reductase rubredoxin domain] + NADH. Its pathway is nitrogen metabolism; nitric oxide reduction. Functionally, one of at least two accessory proteins for anaerobic nitric oxide (NO) reductase. Reduces the rubredoxin moiety of NO reductase. The polypeptide is Nitric oxide reductase FlRd-NAD(+) reductase (Escherichia coli (strain K12 / MC4100 / BW2952)).